Consider the following 75-residue polypeptide: UPF0352 protein YejL (75 aa).

This sequence belongs to the UPF0352 family.

The chain is UPF0352 protein YejL from Shigella dysenteriae serotype 1 (strain Sd197).